A 220-amino-acid polypeptide reads, in one-letter code: MSYSLKGLLKRPVHLFVKPPAVEGEYPARGELYYVKGSNGSGKSTVPSYLAENDPQAYVVTYNGKIMLTVCPSYNIICIGKYDKSKSKGVDSLKDTEQMLFALSIADQPEYLKYDVLFEGIIPSTLLSSWIPRLTRPPRELVVLFMDTPLETCVSRVKSRNGGADFNESLVVEKWERVHDHSQRHKGLFPTVPAGMMKSNGLTIEQAVFAFLNRDFGSID.

The protein belongs to the thymidylate kinase family. 5-hmdU DNA kinase subfamily.

The enzyme catalyses 5-hydroxymethyl-dUMP in DNA + ATP = 5-phosphomethyl-dUMP in DNA + ADP + H(+). Functionally, phosphorylates 5-hydroxymethyluracil (5hmdU) into 5-phosphomethyl-2'-deoxyuridine (5- PmdU) on DNA as a step in the pathway leading to thymidine hypermodifications in the viral genome. The phosphate is added internally to the DNA polymer. As a final result of the pathway of hypermodification, 5-aminoethoxy-2'-deoxymethyluridine (5-NeOmdU) substitutes for about 40% of the thymidines in the viral DNA. These modifications probably prevent degradation of viral genome by the host restriction-modification antiviral defense system. This chain is 5-hmdU DNA kinase 1, found in Salmonella phage ViI.